Reading from the N-terminus, the 86-residue chain is Cell division topological specificity factor (86 aa).

It belongs to the MinE family.

Functionally, prevents the cell division inhibition by proteins MinC and MinD at internal division sites while permitting inhibition at polar sites. This ensures cell division at the proper site by restricting the formation of a division septum at the midpoint of the long axis of the cell. This Alteromonas mediterranea (strain DSM 17117 / CIP 110805 / LMG 28347 / Deep ecotype) protein is Cell division topological specificity factor.